The primary structure comprises 298 residues: N-acetylmuramic acid 6-phosphate etherase (298 aa).

In terms of domain architecture, SIS spans 55–218; it reads IHAQVSGGGR…STGLMIKSGK (164 aa). Residue glutamate 83 is the Proton donor of the active site. Residue glutamate 114 is part of the active site.

This sequence belongs to the GCKR-like family. MurNAc-6-P etherase subfamily. As to quaternary structure, homodimer.

The enzyme catalyses N-acetyl-D-muramate 6-phosphate + H2O = N-acetyl-D-glucosamine 6-phosphate + (R)-lactate. It functions in the pathway amino-sugar metabolism; 1,6-anhydro-N-acetylmuramate degradation. Its pathway is amino-sugar metabolism; N-acetylmuramate degradation. It participates in cell wall biogenesis; peptidoglycan recycling. Specifically catalyzes the cleavage of the D-lactyl ether substituent of MurNAc 6-phosphate, producing GlcNAc 6-phosphate and D-lactate. Together with AnmK, is also required for the utilization of anhydro-N-acetylmuramic acid (anhMurNAc) either imported from the medium or derived from its own cell wall murein, and thus plays a role in cell wall recycling. The polypeptide is N-acetylmuramic acid 6-phosphate etherase (Shigella boydii serotype 18 (strain CDC 3083-94 / BS512)).